The following is a 157-amino-acid chain: Molybdopterin synthase catalytic subunit (157 aa).

Substrate is bound by residues 103–104 (HR), lysine 119, and 126–128 (KKE).

It belongs to the MoaE family. MOCS2B subfamily. Heterotetramer; composed of 2 small (MOCS2A) and 2 large (MOCS2B) subunits.

The protein resides in the cytoplasm. It carries out the reaction 2 [molybdopterin-synthase sulfur-carrier protein]-C-terminal-Gly-aminoethanethioate + cyclic pyranopterin phosphate + H2O = molybdopterin + 2 [molybdopterin-synthase sulfur-carrier protein]-C-terminal Gly-Gly + 2 H(+). The protein operates within cofactor biosynthesis; molybdopterin biosynthesis. Its function is as follows. Catalytic subunit of the molybdopterin synthase complex, a complex that catalyzes the conversion of precursor Z into molybdopterin. Acts by mediating the incorporation of 2 sulfur atoms from thiocarboxylated MOCS2A into precursor Z to generate a dithiolene group. This Culex quinquefasciatus (Southern house mosquito) protein is Molybdopterin synthase catalytic subunit.